The chain runs to 35 residues: Photosystem II reaction center protein M (35 aa).

Residues 5 to 25 (ILGLIATALFILIPTSFLIIL) form a helical membrane-spanning segment.

The protein belongs to the PsbM family. In terms of assembly, PSII is composed of 1 copy each of membrane proteins PsbA, PsbB, PsbC, PsbD, PsbE, PsbF, PsbH, PsbI, PsbJ, PsbK, PsbL, PsbM, PsbT, PsbX, PsbY, PsbZ, Psb30/Ycf12, at least 3 peripheral proteins of the oxygen-evolving complex and a large number of cofactors. It forms dimeric complexes.

The protein localises to the plastid. It is found in the chloroplast thylakoid membrane. In terms of biological role, one of the components of the core complex of photosystem II (PSII). PSII is a light-driven water:plastoquinone oxidoreductase that uses light energy to abstract electrons from H(2)O, generating O(2) and a proton gradient subsequently used for ATP formation. It consists of a core antenna complex that captures photons, and an electron transfer chain that converts photonic excitation into a charge separation. This subunit is found at the monomer-monomer interface. This Oltmannsiellopsis viridis (Marine flagellate) protein is Photosystem II reaction center protein M.